Reading from the N-terminus, the 238-residue chain is Demethylmenaquinone methyltransferase (238 aa).

S-adenosyl-L-methionine-binding positions include Thr65, Asp85, and 109-110; that span reads DA.

The protein belongs to the class I-like SAM-binding methyltransferase superfamily. MenG/UbiE family.

The catalysed reaction is a 2-demethylmenaquinol + S-adenosyl-L-methionine = a menaquinol + S-adenosyl-L-homocysteine + H(+). The protein operates within quinol/quinone metabolism; menaquinone biosynthesis; menaquinol from 1,4-dihydroxy-2-naphthoate: step 2/2. Its function is as follows. Methyltransferase required for the conversion of demethylmenaquinol (DMKH2) to menaquinol (MKH2). The protein is Demethylmenaquinone methyltransferase of Roseiflexus sp. (strain RS-1).